The primary structure comprises 308 residues: Ribonuclease HIII (308 aa).

The region spanning 92–308 is the RNase H type-2 domain; that stretch reads DNHIGSDEAG…ANTQKAQKLL (217 aa). Residues D98, E99, and D204 each coordinate a divalent metal cation.

This sequence belongs to the RNase HII family. RnhC subfamily. Requires Mn(2+) as cofactor. Mg(2+) is required as a cofactor.

The protein resides in the cytoplasm. It carries out the reaction Endonucleolytic cleavage to 5'-phosphomonoester.. Its function is as follows. Endonuclease that specifically degrades the RNA of RNA-DNA hybrids. The sequence is that of Ribonuclease HIII from Oceanobacillus iheyensis (strain DSM 14371 / CIP 107618 / JCM 11309 / KCTC 3954 / HTE831).